The following is a 185-amino-acid chain: Elongation factor P (185 aa).

It belongs to the elongation factor P family.

Its subcellular location is the cytoplasm. Its pathway is protein biosynthesis; polypeptide chain elongation. Involved in peptide bond synthesis. Stimulates efficient translation and peptide-bond synthesis on native or reconstituted 70S ribosomes in vitro. Probably functions indirectly by altering the affinity of the ribosome for aminoacyl-tRNA, thus increasing their reactivity as acceptors for peptidyl transferase. The chain is Elongation factor P from Acaryochloris marina (strain MBIC 11017).